The sequence spans 953 residues: UvrABC system protein A (953 aa).

Residue 33 to 40 (GLSGSGKS) coordinates ATP. 2 consecutive ABC transporter domains span residues 320–599 (WGST…EESI) and 619–949 (GHDN…RYLK). 652–659 (GVSGSGKS) is an ATP binding site. Residues 752–778 (CEACQGDGLIKIEMHFLPDVYVKCDIC) form a C4-type zinc finger.

This sequence belongs to the ABC transporter superfamily. UvrA family. As to quaternary structure, forms a heterotetramer with UvrB during the search for lesions.

Its subcellular location is the cytoplasm. Functionally, the UvrABC repair system catalyzes the recognition and processing of DNA lesions. UvrA is an ATPase and a DNA-binding protein. A damage recognition complex composed of 2 UvrA and 2 UvrB subunits scans DNA for abnormalities. When the presence of a lesion has been verified by UvrB, the UvrA molecules dissociate. The chain is UvrABC system protein A from Rickettsia typhi (strain ATCC VR-144 / Wilmington).